Here is a 956-residue protein sequence, read N- to C-terminus: UvrABC system protein A (956 aa).

33 to 40 lines the ATP pocket; that stretch reads GLSGSGKS. The C4-type zinc finger occupies 252–279; sequence CPYCGFSVGELEPRMFSFNSPFGACPTC. 2 consecutive ABC transporter domains span residues 309 to 587 and 607 to 936; these read WRPI…KNSI and GNGL…KYLK. 639-646 serves as a coordination point for ATP; that stretch reads GVSGSGKS. The segment at 738–764 adopts a C4-type zinc-finger fold; sequence CEACKGDGIIKIEMHFLPDVYVPCEVC.

The protein belongs to the ABC transporter superfamily. UvrA family. As to quaternary structure, forms a heterotetramer with UvrB during the search for lesions.

It localises to the cytoplasm. Its function is as follows. The UvrABC repair system catalyzes the recognition and processing of DNA lesions. UvrA is an ATPase and a DNA-binding protein. A damage recognition complex composed of 2 UvrA and 2 UvrB subunits scans DNA for abnormalities. When the presence of a lesion has been verified by UvrB, the UvrA molecules dissociate. In Listeria monocytogenes serovar 1/2a (strain ATCC BAA-679 / EGD-e), this protein is UvrABC system protein A.